Here is a 402-residue protein sequence, read N- to C-terminus: Heat stress transcription factor A-6a (402 aa).

The disordered stretch occupies residues 1-28 (MLKPQTPRARRAAHPNSHMASSSSSSSL). A coiled-coil region spans residues 212 to 258 (EVVSLKRDRAALRAEVIMLKQQYNACKSQLIAMEEMVRNIERRQQQT). The segment at 216 to 266 (LKRDRAALRAEVIMLKQQYNACKSQLIAMEEMVRNIERRQQQTIGFFAKVL) is hydrophobic repeat HR-A/B. Residues 290-293 (KRQR) carry the Nuclear localization signal motif. Positions 349–358 (DDVWEELDAL) match the AHA motif.

Belongs to the HSF family. Class A subfamily. In terms of assembly, homotrimer. Exhibits temperature-dependent phosphorylation.

It localises to the nucleus. In terms of biological role, transcriptional regulator that specifically binds DNA of heat shock promoter elements (HSE). The sequence is that of Heat stress transcription factor A-6a (HSFA6B) from Oryza sativa subsp. japonica (Rice).